The sequence spans 727 residues: ATP-dependent RNA helicase Ddx1 (727 aa).

The Helicase ATP-binding domain occupies 2 to 428 (TAFEEFGVLP…AERLMHFPTW (427 aa)). 46–53 (AETGSGKT) contacts ATP. The B30.2/SPRY domain occupies 69 to 246 (RDLEEGKAGK…MQFNFGKTDF (178 aa)). The short motif at 370–373 (DEAD) is the DEAD box element. Residues 483 to 676 (TLSQAVKLLK…QVDKTMDVPV (194 aa)) form the Helicase C-terminal domain.

It belongs to the DEAD box helicase family. DDX1 subfamily.

It carries out the reaction ATP + H2O = ADP + phosphate + H(+). Its function is as follows. Acts as an ATP-dependent RNA helicase, able to unwind both RNA-RNA and RNA-DNA duplexes. Possesses 5' single-stranded RNA overhang nuclease activity. The sequence is that of ATP-dependent RNA helicase Ddx1 (Ddx1) from Drosophila melanogaster (Fruit fly).